Here is a 189-residue protein sequence, read N- to C-terminus: Glycerol-3-phosphate acyltransferase (189 aa).

Helical transmembrane passes span 1-21 (MFWLLAILAYLLGSLSFAILL), 51-71 (LAILTLLGDLCKGLLPVLIAS), 77-97 (LQDQAWIGVCAVIGHLFPLYF), 111-131 (MLLGLYPPAALLAVCAWLLTF), and 151-171 (LLAWQEPAALLPMSTLTLLIV).

It belongs to the PlsY family. As to quaternary structure, probably interacts with PlsX.

The protein localises to the cell inner membrane. The catalysed reaction is an acyl phosphate + sn-glycerol 3-phosphate = a 1-acyl-sn-glycero-3-phosphate + phosphate. The protein operates within lipid metabolism; phospholipid metabolism. In terms of biological role, catalyzes the transfer of an acyl group from acyl-phosphate (acyl-PO(4)) to glycerol-3-phosphate (G3P) to form lysophosphatidic acid (LPA). This enzyme utilizes acyl-phosphate as fatty acyl donor, but not acyl-CoA or acyl-ACP. This Pseudomonas fluorescens (strain Pf0-1) protein is Glycerol-3-phosphate acyltransferase.